A 395-amino-acid chain; its full sequence is Elongation factor Tu (395 aa).

One can recognise a tr-type G domain in the interval 10–204; that stretch reads KPHVNVGTIG…AVDNWVPLPE (195 aa). Residues 19 to 26 are G1; the sequence is GHVDHGKT. Position 19-26 (19-26) interacts with GTP; it reads GHVDHGKT. T26 lines the Mg(2+) pocket. Residues 60–64 are G2; the sequence is GITIN. Positions 81–84 are G3; sequence DCPG. GTP is bound by residues 81–85 and 136–139; these read DCPGH and NKCD. Residues 136 to 139 are G4; sequence NKCD. A G5 region spans residues 174–176; sequence SAL.

It belongs to the TRAFAC class translation factor GTPase superfamily. Classic translation factor GTPase family. EF-Tu/EF-1A subfamily. In terms of assembly, monomer.

It localises to the cytoplasm. It carries out the reaction GTP + H2O = GDP + phosphate + H(+). Its function is as follows. GTP hydrolase that promotes the GTP-dependent binding of aminoacyl-tRNA to the A-site of ribosomes during protein biosynthesis. This is Elongation factor Tu from Porphyromonas gingivalis (strain ATCC 33277 / DSM 20709 / CIP 103683 / JCM 12257 / NCTC 11834 / 2561).